The chain runs to 479 residues: T-box transcription factor TBX1 (479 aa).

2 stretches are compositionally biased toward low complexity: residues 15–31 (ASSL…ADPF) and 59–86 (YPFA…AAAV). Residues 15–86 (ASSLSGLGSP…GPGASRAAAV (72 aa)) are disordered. The segment at residues 108-286 (LWDEFNQLGT…SNPFAKGFRD (179 aa)) is a DNA-binding region (T-box). Residues 311 to 398 (RNPVASPTQP…APGASEPLHH (88 aa)) form a disordered region. The segment covering 313 to 322 (PVASPTQPNG) has biased composition (polar residues). Residues 323-338 (SDKDAAEARREFDRDS) are compositionally biased toward basic and acidic residues. A Nuclear localization signal motif is present at residues 415–426 (KSRPAPYPLPGL).

Binds DNA as a dimer. Interacts with DSCR6. Interacts with NKX2-5. Expressed in skeletal muscle, lung and testis. Highly expressed in hair follicle stem cell, but not in terminally differentiating cells.

Its subcellular location is the nucleus. Functionally, transcription factor that plays a key role in cardiovascular development by promoting pharyngeal arch segmentation during embryonic development. Also involved in craniofacial muscle development. Together with NKX2-5, acts as a regulator of asymmetric cardiac morphogenesis by promoting expression of PITX2. Acts upstream of TBX1 for the formation of the thymus and parathyroid glands from the third pharyngeal pouch. Required for hair follicle stem cell self-renewal. Binds to the palindromic T site 5'-TTCACACCTAGGTGTGAA-3' DNA sequence. The sequence is that of T-box transcription factor TBX1 from Mus musculus (Mouse).